We begin with the raw amino-acid sequence, 172 residues long: NADH-quinone oxidoreductase subunit B (172 aa).

[4Fe-4S] cluster contacts are provided by Cys46, Cys47, Cys111, and Cys141.

Belongs to the complex I 20 kDa subunit family. NDH-1 is composed of 14 different subunits. Subunits NuoB, C, D, E, F, and G constitute the peripheral sector of the complex. [4Fe-4S] cluster is required as a cofactor.

Its subcellular location is the cell membrane. The catalysed reaction is a quinone + NADH + 5 H(+)(in) = a quinol + NAD(+) + 4 H(+)(out). Its function is as follows. NDH-1 shuttles electrons from NADH, via FMN and iron-sulfur (Fe-S) centers, to quinones in the respiratory chain. The immediate electron acceptor for the enzyme in this species is believed to be a menaquinone. Couples the redox reaction to proton translocation (for every two electrons transferred, four hydrogen ions are translocated across the cytoplasmic membrane), and thus conserves the redox energy in a proton gradient. The polypeptide is NADH-quinone oxidoreductase subunit B (Bacillus anthracis (strain A0248)).